Here is a 338-residue protein sequence, read N- to C-terminus: N-acetylmuramate/N-acetylglucosamine kinase (338 aa).

The protein belongs to the kinase AmgK family.

The enzyme catalyses N-acetyl-D-muramate + ATP = N-acetyl-alpha-D-muramate 1-phosphate + ADP + H(+). It catalyses the reaction N-acetyl-D-glucosamine + ATP = N-acetyl-alpha-D-glucosamine 1-phosphate + ADP + H(+). It participates in cell wall biogenesis; peptidoglycan recycling. Its function is as follows. Sugar kinase that catalyzes the ATP-dependent phosphorylation of N-acetylmuramate (MurNAc) and N-acetylglucosamine (GlcNAc) at its C1 hydroxyl group, leading to MurNAc alpha-1P and GlcNAc alpha-1P, respectively. Is involved in peptidoglycan recycling as part of a cell wall recycling pathway that bypasses de novo biosynthesis of the peptidoglycan precursor UDP-MurNAc. Plays a role in intrinsic resistance to fosfomycin, which targets the de novo synthesis of UDP-MurNAc. The sequence is that of N-acetylmuramate/N-acetylglucosamine kinase from Pseudomonas aeruginosa (strain ATCC 15692 / DSM 22644 / CIP 104116 / JCM 14847 / LMG 12228 / 1C / PRS 101 / PAO1).